The primary structure comprises 248 residues: Probable phosphatase VFMJ11_A0091 (248 aa).

9 residues coordinate Zn(2+): His-8, His-10, His-16, His-41, Glu-74, His-102, His-132, Asp-194, and His-196.

Belongs to the PHP family. Requires Zn(2+) as cofactor.

The chain is Probable phosphatase VFMJ11_A0091 from Aliivibrio fischeri (strain MJ11) (Vibrio fischeri).